The following is a 379-amino-acid chain: MLGKAVHSLSRIGDELYLEPLEDGLSLRTVNSSRSAYACFLFAPLFFQQYQAATPGQDLLRCKILMKSFLSVFRSLAMLEKTVEKCCISLNGRSSRLVVQLHCKFGVRKTHNLSFQDCESLQAVFDPASCPHMLRAPARVLGEAVLPFPPALAEVTLGIGRGRRVILRSYHEEEADSTAKAMVTEMCLGEEDFQQLQAQEGVAITFCLKEFRGLLSFAESANLNLSIHFDAPGRPAIFTIKDSLLDGHFVLATLSDTDSHSQDLGSPERHQPVPQLQAHSIPHPDDFANDDIDSYMIAMETTIGNEGSRVLPSISLSPGPQHPESPGLHSEEDEAEPSTVPGTPPPKKFRSLFFGSILAPARSPQGPSPVLAEDSEGEG.

Tyrosine 17 carries the post-translational modification Phosphotyrosine. The possesses 3'-5' exonuclease activity stretch occupies residues 40–80; that stretch reads FLFAPLFFQQYQAATPGQDLLRCKILMKSFLSVFRSLAMLE. A sufficient for interaction with ABL1 region spans residues 255–379; it reads SDTDSHSQDL…VLAEDSEGEG (125 aa). A compositionally biased stretch (basic and acidic residues) spans 257–271; sequence TDSHSQDLGSPERHQ. 2 disordered regions span residues 257 to 289 and 308 to 379; these read TDSH…DFAN and SRVL…EGEG. Phosphoserine occurs at positions 261, 266, 317, 330, 363, 368, and 375.

It belongs to the rad9 family. Component of the toroidal 9-1-1 (RAD9-RAD1-HUS1) complex, composed of RAD9A, RAD1 and HUS1. The 9-1-1 complex associates with LIG1, POLB, FEN1, RAD17, HDAC1, RPA1 and RPA2. The 9-1-1 complex associates with the RAD17-RFC complex. RAD9A interacts with BCL2L1, FEN1, RAD9B, ABL1, RPA1, ATAD5 and RPA2. Interacts with DNAJC7. Interacts (when phosphorylated) with TOPBP1. Post-translationally, constitutively phosphorylated on serine and threonine amino acids in absence of DNA damage. Hyperphosphorylated by PRKCD and ABL1 upon DNA damage. Its phosphorylation by PRKCD may be required for the formation of the 9-1-1 complex. Phosphorylated at Ser-330 and Ser-375 by CK2, promoting interaction with TOPBP1.

Its subcellular location is the nucleus. It catalyses the reaction Exonucleolytic cleavage in the 3'- to 5'-direction to yield nucleoside 5'-phosphates.. Component of the 9-1-1 cell-cycle checkpoint response complex that plays a major role in DNA repair. The 9-1-1 complex is recruited to DNA lesion upon damage by the RAD17-replication factor C (RFC) clamp loader complex. Acts then as a sliding clamp platform on DNA for several proteins involved in long-patch base excision repair (LP-BER). The 9-1-1 complex stimulates DNA polymerase beta (POLB) activity by increasing its affinity for the 3'-OH end of the primer-template and stabilizes POLB to those sites where LP-BER proceeds; endonuclease FEN1 cleavage activity on substrates with double, nick, or gap flaps of distinct sequences and lengths; and DNA ligase I (LIG1) on long-patch base excision repair substrates. The 9-1-1 complex is necessary for the recruitment of RHNO1 to sites of double-stranded breaks (DSB) occurring during the S phase. RAD9A possesses 3'-&gt;5' double stranded DNA exonuclease activity. The polypeptide is Cell cycle checkpoint control protein RAD9A (RAD9A) (Macaca fascicularis (Crab-eating macaque)).